We begin with the raw amino-acid sequence, 265 residues long: MQYGDKTTFKQSLAIQGRVINALLMREIITRYGRQNIGFFWLFVEPLLMTFFIVMMWKFIRADKFSTLNMIAFVMTGYPMAMMWRNASNRAIGSISANLSLLYHRNVRVLDTIFTRVLLEVAGASIAQILFMAILVMIDWIDAPHDVFYMLIAWFLMAMFAFALGLIICAIAQQFDVFGKIWGTLSFVLLPISGAFFFVHNLPAQAQSIALWFPMIHGTEMFRHGYFGDTVVTYESIGFLVVSDLALLLLGLVMVKNFSKGVEPQ.

6 helical membrane-spanning segments follow: residues 37–57 (IGFF…VMMW), 64–84 (KFST…AMMW), 118–138 (LLEV…LVMI), 151–171 (LIAW…ICAI), 178–198 (FGKI…AFFF), and 235–255 (ESIG…LVMV). Residues 37-258 (IGFFWLFVEP…LLGLVMVKNF (222 aa)) form the ABC transmembrane type-2 domain.

Belongs to the ABC-2 integral membrane protein family.

It is found in the cell inner membrane. Its function is as follows. May form an ATP-driven capsule polysaccharide export apparatus, in association with the BexA, BexC and BexD proteins. The chain is Capsule polysaccharide export inner-membrane protein BexB (bexB) from Haemophilus influenzae.